Here is a 409-residue protein sequence, read N- to C-terminus: Fructose-1,6-bisphosphatase, chloroplastic (409 aa).

Residues 1–49 (MAAATTTTSRPLLLSRQQAAASSLQCRLPRRPGSSLFAGQGQASTPNVR) constitute a chloroplast transit peptide. Residues Glu131, Glu160, Asp181, Leu183, and Asp184 each contribute to the Mg(2+) site. 184-187 (DGSS) is a substrate binding site. An intrachain disulfide couples Cys223 to Cys228. Substrate contacts are provided by Asn287, Tyr319, Tyr337, Tyr339, and Lys349. Glu355 is a binding site for Mg(2+).

This sequence belongs to the FBPase class 1 family. In terms of assembly, homotetramer. It depends on Mg(2+) as a cofactor. In photosynthetically active tissues, and in the shoot and root apical meristems.

The protein resides in the plastid. The protein localises to the chloroplast. It carries out the reaction beta-D-fructose 1,6-bisphosphate + H2O = beta-D-fructose 6-phosphate + phosphate. It participates in carbohydrate biosynthesis; Calvin cycle. This Triticum aestivum (Wheat) protein is Fructose-1,6-bisphosphatase, chloroplastic (FBP).